Consider the following 117-residue polypeptide: 3',5'-cyclic-AMP phosphodiesterase 4A (117 aa).

The segment at 42–79 is disordered; that stretch reads KQNEVEIPSPTMKDREPQEAPRQRPCQQLPPPVPHLQP. Residues 53 to 63 show a composition bias toward basic and acidic residues; the sequence is MKDREPQEAPR. Positions 78 to 117 are catalytic; that stretch reads QPMSQITGVKRLSHNSGLNNASIPRFGVKTDQEELLAQEL.

The protein belongs to the cyclic nucleotide phosphodiesterase family. PDE4 subfamily. In terms of assembly, interacts with LYN (via SH3 domain). Interacts with ARRB2. Zn(2+) serves as cofactor. Requires Mg(2+) as cofactor. It depends on Mn(2+) as a cofactor. Post-translationally, proteolytically cleaved by CASP3.

The protein resides in the cytoplasm. It localises to the cytosol. It is found in the membrane. The catalysed reaction is 3',5'-cyclic AMP + H2O = AMP + H(+). Its pathway is purine metabolism; 3',5'-cyclic AMP degradation; AMP from 3',5'-cyclic AMP: step 1/1. Its function is as follows. Hydrolyzes the second messenger 3',5'-cyclic AMP (cAMP), which is a key regulator of many important physiological processes. The polypeptide is 3',5'-cyclic-AMP phosphodiesterase 4A (PDE4A) (Cavia porcellus (Guinea pig)).